Consider the following 386-residue polypeptide: Succinate--CoA ligase [ADP-forming] subunit beta (386 aa).

The 236-residue stretch at 9–244 (KEIFRKYGVP…LAEEEPREIQ (236 aa)) folds into the ATP-grasp domain. ATP is bound by residues K46, 53 to 55 (GRG), E99, L102, and E107. Mg(2+)-binding residues include N199 and D213. Residues N264 and 321 to 323 (GIM) each bind substrate.

This sequence belongs to the succinate/malate CoA ligase beta subunit family. As to quaternary structure, heterotetramer of two alpha and two beta subunits. Requires Mg(2+) as cofactor.

It catalyses the reaction succinate + ATP + CoA = succinyl-CoA + ADP + phosphate. The enzyme catalyses GTP + succinate + CoA = succinyl-CoA + GDP + phosphate. Its pathway is carbohydrate metabolism; tricarboxylic acid cycle; succinate from succinyl-CoA (ligase route): step 1/1. Succinyl-CoA synthetase functions in the citric acid cycle (TCA), coupling the hydrolysis of succinyl-CoA to the synthesis of either ATP or GTP and thus represents the only step of substrate-level phosphorylation in the TCA. The beta subunit provides nucleotide specificity of the enzyme and binds the substrate succinate, while the binding sites for coenzyme A and phosphate are found in the alpha subunit. This Myxococcus xanthus (strain DK1622) protein is Succinate--CoA ligase [ADP-forming] subunit beta.